Reading from the N-terminus, the 632-residue chain is Chaperone protein HtpG (632 aa).

The segment at 1 to 339 (MAHETMSFQA…SADLPLNVSR (339 aa)) is a; substrate-binding. Residues 340–559 (EILQESRDVK…DNDMSGYLQR (220 aa)) form a b region. The c stretch occupies residues 560 to 632 (MLKAAGQNAP…TNALLLSRAA (73 aa)).

Belongs to the heat shock protein 90 family. As to quaternary structure, homodimer.

It localises to the cytoplasm. Its function is as follows. Molecular chaperone. Has ATPase activity. This chain is Chaperone protein HtpG, found in Burkholderia ambifaria (strain ATCC BAA-244 / DSM 16087 / CCUG 44356 / LMG 19182 / AMMD) (Burkholderia cepacia (strain AMMD)).